A 429-amino-acid chain; its full sequence is 3-phosphoshikimate 1-carboxyvinyltransferase (429 aa).

Residues Lys25, Ser26, and Arg30 each contribute to the 3-phosphoshikimate site. Lys25 lines the phosphoenolpyruvate pocket. Phosphoenolpyruvate is bound by residues Gly99 and Arg127. Residues Ser173, Ser174, Gln175, Ser201, Asp317, Asn340, and Lys344 each contribute to the 3-phosphoshikimate site. Residue Gln175 participates in phosphoenolpyruvate binding. Asp317 functions as the Proton acceptor in the catalytic mechanism. Phosphoenolpyruvate contacts are provided by Arg348, Arg390, and Lys415.

Belongs to the EPSP synthase family. In terms of assembly, monomer.

Its subcellular location is the cytoplasm. The catalysed reaction is 3-phosphoshikimate + phosphoenolpyruvate = 5-O-(1-carboxyvinyl)-3-phosphoshikimate + phosphate. The protein operates within metabolic intermediate biosynthesis; chorismate biosynthesis; chorismate from D-erythrose 4-phosphate and phosphoenolpyruvate: step 6/7. Functionally, catalyzes the transfer of the enolpyruvyl moiety of phosphoenolpyruvate (PEP) to the 5-hydroxyl of shikimate-3-phosphate (S3P) to produce enolpyruvyl shikimate-3-phosphate and inorganic phosphate. In Pseudoalteromonas atlantica (strain T6c / ATCC BAA-1087), this protein is 3-phosphoshikimate 1-carboxyvinyltransferase.